The sequence spans 351 residues: N-acetyl-gamma-glutamyl-phosphate reductase (351 aa).

Cysteine 150 is a catalytic residue.

This sequence belongs to the NAGSA dehydrogenase family. Type 1 subfamily.

It localises to the cytoplasm. The enzyme catalyses N-acetyl-L-glutamate 5-semialdehyde + phosphate + NADP(+) = N-acetyl-L-glutamyl 5-phosphate + NADPH + H(+). It functions in the pathway amino-acid biosynthesis; L-arginine biosynthesis; N(2)-acetyl-L-ornithine from L-glutamate: step 3/4. In terms of biological role, catalyzes the NADPH-dependent reduction of N-acetyl-5-glutamyl phosphate to yield N-acetyl-L-glutamate 5-semialdehyde. The protein is N-acetyl-gamma-glutamyl-phosphate reductase of Heliobacterium modesticaldum (strain ATCC 51547 / Ice1).